Reading from the N-terminus, the 563-residue chain is Anaerobic glycerol-3-phosphate dehydrogenase subunit A (563 aa).

Residue 20 to 48 (DVIIIGGGATGAGIARDCALRGIDCILLE) coordinates FAD.

The protein belongs to the FAD-dependent glycerol-3-phosphate dehydrogenase family. As to quaternary structure, composed of a catalytic GlpA/B dimer and of membrane bound GlpC. It depends on FAD as a cofactor. The cofactor is FMN.

It localises to the cell inner membrane. It carries out the reaction a quinone + sn-glycerol 3-phosphate = dihydroxyacetone phosphate + a quinol. It functions in the pathway polyol metabolism; glycerol degradation via glycerol kinase pathway; glycerone phosphate from sn-glycerol 3-phosphate (anaerobic route): step 1/1. In Haemophilus influenzae (strain ATCC 51907 / DSM 11121 / KW20 / Rd), this protein is Anaerobic glycerol-3-phosphate dehydrogenase subunit A (glpA).